A 357-amino-acid polypeptide reads, in one-letter code: Cytoplasmic tRNA 2-thiolation protein 1 (357 aa).

Residues 314–348 (GVSRTRGRRGEKAGLHPDVGRGGGGGSSGPAEVAS) are disordered. The span at 321–332 (RRGEKAGLHPDV) shows a compositional bias: basic and acidic residues.

This sequence belongs to the TtcA family. CTU1/NCS6/ATPBD3 subfamily.

It is found in the cytoplasm. It participates in tRNA modification; 5-methoxycarbonylmethyl-2-thiouridine-tRNA biosynthesis. Functionally, plays a central role in 2-thiolation of mcm(5)S(2)U at tRNA wobble positions of tRNA(Lys), tRNA(Glu) and tRNA(Gln). Directly binds tRNAs and probably acts by catalyzing adenylation of tRNAs, an intermediate required for 2-thiolation. It is unclear whether it acts as a sulfurtransferase that transfers sulfur from thiocarboxylated URM1 onto the uridine of tRNAs at wobble position. The polypeptide is Cytoplasmic tRNA 2-thiolation protein 1 (Chlamydomonas reinhardtii (Chlamydomonas smithii)).